We begin with the raw amino-acid sequence, 109 residues long: MFGKGGMGNLMKQAQQMQDKMAKVQEEIARMEVTGEAGAGLVKVTMTGSHSVRKVDIDPSLLEDDKEMLEDLIAAACNDAARRVEENQKDKMAEVTGGMQLPPGMKMPF.

Residues 88–109 (QKDKMAEVTGGMQLPPGMKMPF) form a disordered region.

The protein belongs to the YbaB/EbfC family. In terms of assembly, homodimer.

The protein localises to the cytoplasm. It is found in the nucleoid. Functionally, binds to DNA and alters its conformation. May be involved in regulation of gene expression, nucleoid organization and DNA protection. This Shewanella woodyi (strain ATCC 51908 / MS32) protein is Nucleoid-associated protein Swoo_1794.